The chain runs to 132 residues: Global transcriptional regulator Spx 2 (132 aa).

A disulfide bond links C10 and C13.

It belongs to the ArsC family. Spx subfamily. In terms of assembly, interacts with the C-terminal domain of the alpha subunit of the RNAP.

The protein resides in the cytoplasm. Global transcriptional regulator that plays a key role in stress response and exerts either positive or negative regulation of genes. Acts by interacting with the C-terminal domain of the alpha subunit of the RNA polymerase (RNAP). This interaction can enhance binding of RNAP to the promoter region of target genes and stimulate their transcription, or block interaction of RNAP with activator. This Lactococcus lactis subsp. lactis (strain IL1403) (Streptococcus lactis) protein is Global transcriptional regulator Spx 2.